Here is a 101-residue protein sequence, read N- to C-terminus: uncharacterized protein (101 aa).

The next 2 helical transmembrane spans lie at 10 to 30 (VLAI…IGSI) and 67 to 87 (IILG…ILSI).

It is found in the membrane. This is an uncharacterized protein from Acanthamoeba polyphaga (Amoeba).